The primary structure comprises 186 residues: UPF0301 protein HI_0304 (186 aa).

The protein belongs to the UPF0301 (AlgH) family.

In Haemophilus influenzae (strain ATCC 51907 / DSM 11121 / KW20 / Rd), this protein is UPF0301 protein HI_0304.